The sequence spans 92 residues: Probable Fe(2+)-trafficking protein (92 aa).

It belongs to the Fe(2+)-trafficking protein family.

Its function is as follows. Could be a mediator in iron transactions between iron acquisition and iron-requiring processes, such as synthesis and/or repair of Fe-S clusters in biosynthetic enzymes. This chain is Probable Fe(2+)-trafficking protein, found in Shewanella sp. (strain ANA-3).